A 40-amino-acid polypeptide reads, in one-letter code: Antifungal protein ginkbilobin-1 (40 aa).

The Gnk2-homologous domain maps to 3 to 40; the sequence is TAFVSSAHNTQKIPAGAPFNRNLRAMLADLRQNAAFAG. Alpha-D-mannopyranose is bound at residue Asn11.

In terms of tissue distribution, expressed in seeds (at the protein level).

Possesses antifungal activity against B.cinerea, M.arachidicola, F.oxysporum, R.solani and C.comatus and moderate antibacterial activity against S.aureus, P.aeruginosa and E.coli. Inhibits HIV-1 reverse transcriptase and proliferation of murine splenocytes. Exerts antifungal activity through its carbohydrate-binding specificity. This Ginkgo biloba (Ginkgo) protein is Antifungal protein ginkbilobin-1.